Here is a 215-residue protein sequence, read N- to C-terminus: uncharacterized protein (215 aa).

This sequence belongs to the HAD-like hydrolase superfamily. CbbY/CbbZ/Gph/YieH family.

This is an uncharacterized protein from Lacticaseibacillus casei (Lactobacillus casei).